We begin with the raw amino-acid sequence, 450 residues long: Zinc finger protein 446 (450 aa).

Positions 26–108 constitute an SCAN box domain; the sequence is RLRFRGFCYQ…ALVEGLQHDP (83 aa). A Glycyl lysine isopeptide (Lys-Gly) (interchain with G-Cter in SUMO2) cross-link involves residue Lys-130. Disordered regions lie at residues 130 to 155 and 168 to 205; these read KTEE…QDTR and EEPN…SFHP. Ser-137 is subject to Phosphoserine. Residues 208–254 enclose the KRAB domain; that stretch reads IQEEWGLLDRSQKELYWDAMLEKYGTVVSLGLPPHQPEAQAQSELGM. Ser-218 bears the Phosphoserine mark. Disordered stretches follow at residues 263 to 331 and 354 to 389; these read RSLR…PRKP and HTSG…RRSL. Over residues 275–286 the composition is skewed to pro residues; sequence PGCPEAQPPQGP. Positions 287–306 are enriched in low complexity; sequence GPAAWEGLSGAATPAPTVRP. The residue at position 308 (Thr-308) is a Phosphothreonine. A Glycyl lysine isopeptide (Lys-Gly) (interchain with G-Cter in SUMO2) cross-link involves residue Lys-330. C2H2-type zinc fingers lie at residues 332–359, 395–422, and 423–450; these read YTCE…SGPG, YPCE…GQRR, and HFCS…PEVP.

This sequence belongs to the krueppel C2H2-type zinc-finger protein family.

The protein resides in the nucleus. In terms of biological role, may be involved in transcriptional regulation. The polypeptide is Zinc finger protein 446 (ZNF446) (Homo sapiens (Human)).